The following is a 1021-amino-acid chain: Probable calcium-transporting ATPase 6, plasma membrane-type (1021 aa).

Topologically, residues M1–A155 are cytoplasmic. Transmembrane regions (helical) follow at residues L156 to L176 and W181 to V201. Topologically, residues T202 to L241 are cytoplasmic. 2 consecutive transmembrane segments (helical) span residues V242–I262 and V338–L358. Residues A359–N384 lie on the Cytoplasmic side of the membrane. Residues Y385–V405 traverse the membrane as a helical segment. The 4-aspartylphosphate intermediate role is filled by D441. Residues D740 and D744 each coordinate Mg(2+). A helical membrane pass occupies residues I807 to A827. The Cytoplasmic portion of the chain corresponds to V828–Q829. Helical transmembrane passes span L830 to P850 and G879 to I899. The Cytoplasmic segment spans residues E900 to N942. Transmembrane regions (helical) follow at residues W943–L963 and G974–L994. Residues K995–L1021 lie on the Cytoplasmic side of the membrane.

This sequence belongs to the cation transport ATPase (P-type) (TC 3.A.3) family. Type IIB subfamily.

The protein localises to the membrane. It catalyses the reaction Ca(2+)(in) + ATP + H2O = Ca(2+)(out) + ADP + phosphate + H(+). With respect to regulation, activated by calmodulin. Functionally, this magnesium-dependent enzyme catalyzes the hydrolysis of ATP coupled with the translocation of calcium from the cytosol out of the cell, into the endoplasmic reticulum, or into organelles. The chain is Probable calcium-transporting ATPase 6, plasma membrane-type from Oryza sativa subsp. japonica (Rice).